The primary structure comprises 60 residues: Large ribosomal subunit protein bL32 (60 aa).

Belongs to the bacterial ribosomal protein bL32 family.

This chain is Large ribosomal subunit protein bL32, found in Geobacter sulfurreducens (strain ATCC 51573 / DSM 12127 / PCA).